Here is a 1131-residue protein sequence, read N- to C-terminus: Inositol hexakisphosphate and diphosphoinositol-pentakisphosphate kinase 2 (1131 aa).

The segment at 21–53 (DELLDQSKPENLDNLYEHTEDEEDEEDDEYDSP) is disordered. A compositionally biased stretch (basic and acidic residues) spans 25–38 (DQSKPENLDNLYEH). The span at 39–52 (TEDEEDEEDDEYDS) shows a compositional bias: acidic residues. Residue 67–68 (KK) coordinates substrate. Residues Arg148, Lys201, His208, Arg227, 251–254 (EEFM), and 260–262 (DVK) each bind ATP. 227 to 228 (RK) is a substrate binding site. Substrate-binding residues include Lys262 and Arg276. Residues Ser278, Asp323, and 335–337 (DVN) each bind ATP. Residue 340-343 (SFVK) participates in substrate binding. The segment at 385 to 456 (PTTSGTKMEL…VLDIARQLLV (72 aa)) is polyphosphoinositide-binding domain. Residues 912 to 951 (KGCEEDKNLPSGFGYRPASQENESSKKHTHANDSDEDLGV) are disordered. Residues 934-951 (ESSKKHTHANDSDEDLGV) are compositionally biased toward basic and acidic residues.

It belongs to the histidine acid phosphatase family. VIP1 subfamily.

The protein localises to the cytoplasm. It localises to the cytosol. The enzyme catalyses 1D-myo-inositol hexakisphosphate + ATP = 1-diphospho-1D-myo-inositol 2,3,4,5,6-pentakisphosphate + ADP. The catalysed reaction is 5-diphospho-1D-myo-inositol 1,2,3,4,6-pentakisphosphate + ATP + H(+) = 1,5-bis(diphospho)-1D-myo-inositol 2,3,4,6-tetrakisphosphate + ADP. Its function is as follows. Bifunctional inositol kinase that acts in concert with the IP6K kinases IP6K1, IP6K2 and IP6K3 to synthesize the diphosphate group-containing inositol pyrophosphates diphosphoinositol pentakisphosphate, PP-InsP5, and bis-diphosphoinositol tetrakisphosphate, (PP)2-InsP4. PP-InsP5 and (PP)2-InsP4, also respectively called InsP7 and InsP8, regulate a variety of cellular processes, including apoptosis, vesicle trafficking, cytoskeletal dynamics, exocytosis, insulin signaling and neutrophil activation. Phosphorylates inositol hexakisphosphate (InsP6) at position 1 to produce PP-InsP5 which is in turn phosphorylated by IP6Ks to produce (PP)2-InsP4. Alternatively, phosphorylates PP-InsP5 at position 1, produced by IP6Ks from InsP6, to produce (PP)2-InsP4. This Xenopus laevis (African clawed frog) protein is Inositol hexakisphosphate and diphosphoinositol-pentakisphosphate kinase 2.